Here is a 286-residue protein sequence, read N- to C-terminus: Aspartate/glutamate leucyltransferase (286 aa).

Belongs to the R-transferase family. Bpt subfamily.

Its subcellular location is the cytoplasm. The enzyme catalyses N-terminal L-glutamyl-[protein] + L-leucyl-tRNA(Leu) = N-terminal L-leucyl-L-glutamyl-[protein] + tRNA(Leu) + H(+). The catalysed reaction is N-terminal L-aspartyl-[protein] + L-leucyl-tRNA(Leu) = N-terminal L-leucyl-L-aspartyl-[protein] + tRNA(Leu) + H(+). In terms of biological role, functions in the N-end rule pathway of protein degradation where it conjugates Leu from its aminoacyl-tRNA to the N-termini of proteins containing an N-terminal aspartate or glutamate. The sequence is that of Aspartate/glutamate leucyltransferase from Jannaschia sp. (strain CCS1).